The chain runs to 608 residues: Cytoplasmic dynein 1 intermediate chain 1 (608 aa).

2 stretches are compositionally biased toward basic and acidic residues: residues 1-13 (MSDK…ELER) and 20-60 (QIRE…RETE). Residues 1 to 106 (MSDKSDLKAE…SGDLGPLTRR (106 aa)) form a disordered region. Residue Ser-2 is modified to N-acetylserine. Ser-50 is modified (phosphoserine). Residues 70 to 79 (PEPPLVPTPM) show a composition bias toward pro residues. A compositionally biased stretch (low complexity) spans 80 to 90 (SPSSKSVSTPS). A Phosphoserine modification is found at Ser-83. At Thr-88 the chain carries Phosphothreonine. Phosphoserine is present on residues Ser-90, Ser-94, and Ser-97. The interaction with DYNLT1 stretch occupies residues 110–126 (KLGVSKITQVDFLPREV). Positions 132–184 (ETQTPLATHQSEEDEDDEEMVEPKGDQDSEQENEDKKQEVKEAPPRELTEEEK) are disordered. A Phosphothreonine modification is found at Thr-139. 2 positions are modified to phosphoserine: Ser-142 and Ser-160. A compositionally biased stretch (basic and acidic residues) spans 165-184 (EDKKQEVKEAPPRELTEEEK). 7 WD repeats span residues 248–297 (SKHR…TTPE), 301–341 (HCQS…RTPV), 350–391 (AHTH…TPQE), 400–440 (SKPV…AGIG), 445–490 (GHQG…PLYS), 493–533 (DNAD…EVPT), and 539–578 (EGAS…VPHN). Ser-598 carries the post-translational modification Phosphoserine.

Belongs to the dynein intermediate chain family. As to quaternary structure, homodimer. The cytoplasmic dynein 1 complex consists of two catalytic heavy chains (HCs) and a number of non-catalytic subunits presented by intermediate chains (ICs), light intermediate chains (LICs) and light chains (LCs); the composition seems to vary in respect to the IC, LIC and LC composition. The heavy chain homodimer serves as a scaffold for the probable homodimeric assembly of the respective non-catalytic subunits. The ICs and LICs bind directly to the HC dimer and the LCs assemble on the IC dimer. Interacts with DYNC1H1. Interacts with DYNLT1 and DYNLT3. Interacts with DCTN1. Interacts with MCRS1; the interaction is required for the proper distribution of centriolar satellites.

The protein resides in the cytoplasm. Its subcellular location is the chromosome. The protein localises to the centromere. It is found in the kinetochore. It localises to the cytoskeleton. The protein resides in the spindle pole. Acts as one of several non-catalytic accessory components of the cytoplasmic dynein 1 complex that are thought to be involved in linking dynein to cargos and to adapter proteins that regulate dynein function. Cytoplasmic dynein 1 acts as a motor for the intracellular retrograde motility of vesicles and organelles along microtubules. The intermediate chains mediate the binding of dynein to dynactin via its 150 kDa component (p150-glued) DCTN1. May play a role in mediating the interaction of cytoplasmic dynein with membranous organelles and kinetochores. This Bos taurus (Bovine) protein is Cytoplasmic dynein 1 intermediate chain 1 (DYNC1I1).